Consider the following 321-residue polypeptide: MNTVGTPLLWGGFAVVVTIMLAIDLLLQGRRGAHAMTMKQAAAWSLVWVTLSLLFNAAFWWYLVQTEGRAVADPQALAFLTGYLIEKSLAVDNVFVWLMLFSYFSVPAALQRRVLVYGVLGAIVLRTIMIFTGSWLISQFDWILYIFGAFLLFTGVKMALAHEDESGIGDKPLVRWLRGHLRMTDTIDNEHFFVRKNGLLYATPLMLVLILVELSDVIFAVDSIPAIFAVTTDPFIVLTSNLFAILGLRAMYFLLAGVAERFSMLKYGLAVILVFIGIKMLIVDFYHIPIAVSLGVVFGILVMTFIINAWVNYRHDKQRVE.

Residues 1-6 are Periplasmic-facing; sequence MNTVGT. A helical transmembrane segment spans residues 7–27; the sequence is PLLWGGFAVVVTIMLAIDLLL. Over 28 to 43 the chain is Cytoplasmic; the sequence is QGRRGAHAMTMKQAAA. Residues 44–64 traverse the membrane as a helical segment; that stretch reads WSLVWVTLSLLFNAAFWWYLV. The Periplasmic segment spans residues 65 to 89; it reads QTEGRAVADPQALAFLTGYLIEKSL. A helical membrane pass occupies residues 90–110; sequence AVDNVFVWLMLFSYFSVPAAL. Residues 111-113 are Cytoplasmic-facing; the sequence is QRR. Residues 114–134 traverse the membrane as a helical segment; the sequence is VLVYGVLGAIVLRTIMIFTGS. A topological domain (periplasmic) is located at residue W135. Residues 136 to 156 form a helical membrane-spanning segment; sequence LISQFDWILYIFGAFLLFTGV. The Cytoplasmic portion of the chain corresponds to 157–198; it reads KMALAHEDESGIGDKPLVRWLRGHLRMTDTIDNEHFFVRKNG. Residues 199-219 traverse the membrane as a helical segment; that stretch reads LLYATPLMLVLILVELSDVIF. At 220-225 the chain is on the periplasmic side; sequence AVDSIP. The chain crosses the membrane as a helical span at residues 226–246; it reads AIFAVTTDPFIVLTSNLFAIL. Residues 247 to 261 are Cytoplasmic-facing; sequence GLRAMYFLLAGVAER. Residues 262–282 form a helical membrane-spanning segment; that stretch reads FSMLKYGLAVILVFIGIKMLI. Topologically, residues 283–286 are periplasmic; it reads VDFY. The helical transmembrane segment at 287–307 threads the bilayer; that stretch reads HIPIAVSLGVVFGILVMTFII. The Cytoplasmic portion of the chain corresponds to 308–321; the sequence is NAWVNYRHDKQRVE.

Belongs to the TerC family.

The protein resides in the cell inner membrane. Its function is as follows. Has been proposed to be a redox modulator. This is Putative membrane-bound redox modulator Alx (alx) from Escherichia coli O6:H1 (strain CFT073 / ATCC 700928 / UPEC).